We begin with the raw amino-acid sequence, 315 residues long: Beta-carotene hydroxylase 1, chloroplastic (315 aa).

The transit peptide at 1–58 (MAAEISISASSRAICLQRNPFPAPKYFATAPPLLFFSPLTCNLDAILRSRRKPRLAAC) directs the protein to the chloroplast. 2 consecutive transmembrane segments (helical) span residues 112 to 132 (YLVA…ISVY) and 146 to 166 (FSEM…MEYW). The Fatty acid hydroxylase domain occupies 159-286 (AAIGMEYWAR…KFDGVPYGLF (128 aa)). A Histidine box-1 motif is present at residues 171–176 (HRALWH). Residues 183-187 (HESHH) carry the Histidine box-2 motif. The next 2 membrane-spanning stretches (helical) occupy residues 196-216 (LNDI…SFGF) and 222-242 (IPGL…AYMF). The Histidine box-3 motif lies at 244–249 (HDGLVH). A Histidine box-4 motif is present at residues 270-274 (HQLHH).

The protein belongs to the sterol desaturase family.

Its subcellular location is the plastid. The protein localises to the chloroplast membrane. The catalysed reaction is all-trans-beta-carotene + 4 reduced [2Fe-2S]-[ferredoxin] + 2 O2 + 4 H(+) = all-trans-zeaxanthin + 4 oxidized [2Fe-2S]-[ferredoxin] + 2 H2O. The enzyme catalyses all-trans-beta-carotene + 2 reduced [2Fe-2S]-[ferredoxin] + O2 + 2 H(+) = beta-cryptoxanthin + 2 oxidized [2Fe-2S]-[ferredoxin] + H2O. It catalyses the reaction beta-cryptoxanthin + 2 reduced [2Fe-2S]-[ferredoxin] + O2 + 2 H(+) = all-trans-zeaxanthin + 2 oxidized [2Fe-2S]-[ferredoxin] + H2O. Its activity is regulated as follows. Inhibited by o-phenanthroline and 8-hydroxyquinoline. Its function is as follows. Nonheme diiron monooxygenase involved in the biosynthesis of xanthophylls. Specific for beta-ring hydroxylations of beta-carotene. Produces beta-cryptoxanthin and zeaxanthin. Uses ferredoxin as an electron donor. The protein is Beta-carotene hydroxylase 1, chloroplastic of Capsicum annuum (Capsicum pepper).